The chain runs to 191 residues: Photosystem I assembly protein Ycf4 (191 aa).

2 helical membrane-spanning segments follow: residues 33-53 (LLAVIVTIGGLGFTLTCLSSY) and 74-94 (LVMGLYGIAGLLLASYLWAMI).

Belongs to the Ycf4 family.

The protein resides in the cellular thylakoid membrane. Functionally, seems to be required for the assembly of the photosystem I complex. This chain is Photosystem I assembly protein Ycf4, found in Prochlorococcus marinus (strain MIT 9303).